A 148-amino-acid polypeptide reads, in one-letter code: Secretory phospholipase A2 (148 aa).

The signal sequence occupies residues 1–23; the sequence is MKLSVLLALGASSLAAAAPAATA. N-linked (GlcNAc...) asparagine glycosylation is present at Asn-61. A disulfide bond links Cys-62 and Cys-78. His-81 is a catalytic residue. Asp-82 contributes to the Ca(2+) binding site.

It belongs to the phospholipase A2 family. Ca(2+) serves as cofactor.

It localises to the secreted. It carries out the reaction a 1,2-diacyl-sn-glycero-3-phosphocholine + H2O = a 1-acyl-sn-glycero-3-phosphocholine + a fatty acid + H(+). Secretory phospholipase that catalyzes the calcium-dependent hydrolysis of the 2-acyl groups in 3-sn-phosphoglycerides. Increases the ability to utilize host-derived nutrients and lipids, and promotes lipid dropplets accumulation. Plays a role in virulence. The protein is Secretory phospholipase A2 of Arthroderma benhamiae (strain ATCC MYA-4681 / CBS 112371) (Trichophyton mentagrophytes).